We begin with the raw amino-acid sequence, 4065 residues long: MAATFSEPVAIIGTGCRFPGQCNTPSKLWELLQTPKDLLKEIPENRFSTEAFYHPQNYHHGTCNVRHSYFLEEDLRGFDAQFFGINPVEAHSVDPQQRLLLETVYESLEAAGLSMKEMQGSDTAVYVGVMSADFTDMIGRDPETFPTYFATGTARSILSNRLSFFFDWRGPSMTIDTACSSSLIEPRTGANKPDCAEQVAGSNLILGSEQYIAESKLQMLSPTGRSRMWDADADGYARGEGVAAIVLKKLSQAIADGDHIECIIRETGANQDGRTPGITMPSATAQEALIRTTYKKAGLDISKRSDRPQFFEAHGTGTPAGDPIEARAVSNAFFGPRSHFSPTSPDDTLFVGSIKTVVGHTEGTAGLAAVIKASLALQAGVVPPNMHLSKLNPKIEPFYGNVQILSEARQWPKLAEGGVRRVSVNSFGFGGANCHAILEAYEPESTLDRRRYNKRTGKCFTPFLFSAATENALAAQLDKYRAHVACGNASAPGDLKKLSLTLSNRRSALPWRAVVPASNSVERLIENLDQCNDFTNETSASSLGTRPRILGIFTGQGAQWPRMGAALIESSPAAAKILARLDESLRLLPIRDRPTWSLREKILEGAESSSVAMAFISQPVCAAVQIMLVDMLRAAGIEFSGVLGHSSGEISAAYAAGYLSSEDAIRAAYYRGFHMKSLTQKKGAMIAVGTSYDDAKELCDLPAFEGRVCVAASNSPFSVTLSGDADAIDEVKALMDEEKKFNRLLQVDRAYHSHHMKACAAAYMASLQQCGVRTLTRTAASSRCQWVSSVYVRHSAELAAEGGLEAKYWASNLTMPVMFTEALQKLLGDCKDGKAYDLAIEVGPHPALKGPAVQTMSEFLGGQSIPYTGVLSRGKDDVESFSTTLGYIWRTLGEGAVDFLGYSRFMNEEQGEATITPLNGLPTYPWDHHRKFWHESRLSRAYRFNKDPVNELLGRQILDGAPDQLRWRNVLKRNELDWLDGHQVQRQTVFPFMGYVSACVEAAMKIRGDANVQSIELQNFKVGQAVAFNDDDSWIEILVVLDSIKESKVKGTKTISAHFAFHSSSNNETVDMTTHAGCDVLVTYGDSISDLLPPPEIQADDEYFMLGVESDRFYNVLDDIGLGYTGPFRALSGLQRKLGKATGRIKNPASSKLWRKPLLVHPAMLDAGIQSIMLAYCYPGDTMMRSIYLPTGIRRLIINPEHCQTFAGEETDVLFQSSASVDDPQGLSGDVSIYAPGGLSCKAIQVEGLQTQPLFNPTEANDLNIFTELVWGVDRPDAKEIVNKVDVQQLDGDLLFSLERVAYYYLRILDKSIPLSQRTGIDWHFGQLFAYVDHVLSRVERGTNRFARKEWQHDTKEIILEILERYPDNIDLRLMRAVGENIAAVIRGEITMLEPMLQNNMLNDFYVVAHGMPRYTKYLASLASQIGHRYPHMHVLEIGAGTGGATKSFLGALDDKFSTYTFTDISSGFFEKARSVFASYSAKMSFKMLNIEKDIGDQGFVEGSYDVVIASLVLHATRNLGQTLRNVRRLLKPGGYLLLLEITENDQMRFGLLFGGLEGWWLGYDDGRALSPCINIEEWEKYLKQTGFSGIDTLMPHDEILPVPLSVIVSQAVDERTELLKQPLQRLDPSTTLVPQLTIIGSGALAEEVHRLLRPFCGRVNVIESLGHMGADQLPVGGAVICLADIQEPVFKSMDADKLRGFQTIFKQSGSALWVTQGTLNGNPYSRMVIGFGRTIVLEMLHLRLQFLDLDHEAPADPTAIVETFIRLHLAENWKNDGVKITPLLHSVEPEMHIDKEGRGFIPRFKLNKKQNDRYNSGRRKIVKEVPLRQQPVELVPPKSEDASWLLAEGKNMPELKGAIDIDVFYTVTRAVEVSGGTFLYAVLGARRDTKEVVLALSPTQASIIRVPQAFIIPAQDSVEYLQLFYTELLARAVLRDVAAGTVVVVLRPTSMLSCAVDRLAADRGARVLHLADEPGSDWDYLHHKSSKVQVQDWVKSRLGTEAPPAVLLLDFGADQFLLAYLLECLPAEVTRAMVGAQSTSSKARMKLGQSEQEIRSFLADVRYALLPAQQTHQSSKGRSSLKVFTLEHLTTNRAGSDVSVVSWPAGTSTIPVQVQPVNSKVTFSNDKTYWLVGLSGTLGLSLCEWMAQQGARYIVITSRNPNVDERWKNKMEKLGIKVEIIANNICDRKSVRSVYSHICQTMPPIGGVAQGAMVLHDTAFSELDLERINKVMQPKVNGSIYLEEIFHNTPLEFFVFFSSMACVTGNPGQSAYAAANMFMSGLAVQRRKRGLNASVVHIGAIFGNGYVTRELSLEQQNFLRKVGNMWLSEQDFRQLFAEAVLAGQPENTGSPELSTGMMTIDNSEGTKENITWFDNPMFQHCIKESTDGKLGGQTAKGRAVPVKTQLLEAINSAEVYEIIHDAFAAKLRSSLQLEDDRPIVDQTADTLGIDSLFAVDIRSWFIKELQLEIPVLKILGGATVGEILETAQQLLPMELLPKMDPNDKSPARKLKAQPDSSPDKAASAERSRAKAQTAIENDGDRKFAATRAESGAKKGETVSKKVEAVTRPSVQWQVPVEPSTAVGDLDDKSFPGEDGVRLRAGSLDTTFTHKSSASSSASILDASEDQSADSVWSLDTVNNELAVSKKTPISFAQSRIWFLEKFLEDPASALNITLTIELDGSLDVDRFGKAVKLVGQRHEALRTRFVHGDDFDAPMQEVLVHSTLSLEQQDIASDAEADEVYRELQKYRYKLGEGENMRIILLKKSNQLFHLVIGYHHINMDGVSLEVVLRELQMAYDSKRLPNFGTILQYPDFAALQQKEYKSGAWQDEIEFWRKEFDGRPPSVLPLLPMAKTRSRTALTSYSSHTAEFSLDQITLAGIQSACESSKATPFQFHLATFYALLSRMVDAADICIGIGSANRHDTAMMQSVGIYLNLLPIVLKSQPNETFASTLKRVRSKVMTAFAHSRVPFDVIVNELGASRATTHNPLFQVLVNYRQGTATRRSFCGCQSEVRSFEQGQAAYDLGLDIIENPGGECKVIMTGQSTLFVPEDMDMLKDMYQRLLLAFSRNQALRLAIPSLYDPEMVKHALRIGRGPSYTHKWPETLIHQIDDIAKQKSHSLAIVDGSGTFLTYAHMSRRTNAIAASLRGIRRGSRVGVHLDPGADWVCSVLAIMRRDAVYLPLDAVSGYSRLSAILQDSKPDLVLVDNSTEKDATAYFSPILAADQIFNIDTVSVTPPETLAIAAKRGSVAALMYTSGSTGVPKGIIMKHESFRNNIEIISEKLGYNNGHTVTLQQSSFNFDMSLGQIFLALSTGGTLHVVPRHLRADPVAISSIIALHGITNTSATPSEFISWVRYGSVEELRNSAWAAVHSGGEPVRDSLKAAFLTVNKPGLRLLDCYGPTEVTFCSHISDVDYGAEETSMNKGLEVLPNYATYIVDSGMKPVPAGVPGEVLIGGAGVVAGYLHTELNTRGFAHDSFASDEFRKQGWEQLHRTGDFGRINKLNGRLLLEGRIADDTQVKLRGLRIDLKEIEAAMVRAAKGDILDCIVSVAQSADVSDEYLVAYATARPDASNHRLEHLMHQLPLPQYMKPATLVLLEKMPTNASGKIDRSAFKSIPLPKATEDNGMQPEVGQDLNDTESRLKQLWEGVLPKHVFSQHKFTAASDFFNVGGSSMLLISLRAKIQDTFAVVVSLFQLFEASTLGDMAALVDELSSGSAEKTAGPNSALDINWEDETAVSPALLGIPVEKKFFTNPEIVVLTGSTGFLGRAILTRLLNDGIVKEIHCFAVREEIPLFDSPKIIVHRGDLTLPGFGLSQKELASIFSKAHAVIHNGADVSFVKSYHSLKPANLEATKQLVDLCLPYQISFHYISTAAVVNLTGEKSWEQRSVGRFPPPAGTDGYIATKWASERYLEKFNDQYGLPIWIHRPSSITGPGAPANDLMANVVEFSRSTAATLNTNSWSGWLDFISVDEAALQIVDEVYEDYSWPGHVKYLYESGERVVALEDMKNVLEREVGSVFEVVDVEEWISRAEKQGFNPLLGEYLKRVANAPLVFPKLIRHEGFF.

One can recognise a Ketosynthase family 3 (KS3) domain in the interval 6–440 (SEPVAIIGTG…GANCHAILEA (435 aa)). Active-site for beta-ketoacyl synthase activity residues include Cys-179, His-314, and His-360. Residues 552 to 875 (IFTGQGAQWP…PYTGVLSRGK (324 aa)) are acyl transferase. Positions 950 to 1087 (NELLGRQILD…CDVLVTYGDS (138 aa)) are N-terminal hotdog fold. The 311-residue stretch at 950–1260 (NELLGRQILD…TQPLFNPTEA (311 aa)) folds into the PKS/mFAS DH domain. A dehydratase (DH) domain region spans residues 951–1254 (ELLGRQILDG…QVEGLQTQPL (304 aa)). The active-site Proton acceptor; for dehydratase activity is the His-982. A C-terminal hotdog fold region spans residues 1102-1260 (EYFMLGVESD…TQPLFNPTEA (159 aa)). The active-site Proton donor; for dehydratase activity is Asp-1166. The interval 1409 to 1593 (AHGMPRYTKY…KQTGFSGIDT (185 aa)) is methyltransferase (MT) domain. Residues 2129–2302 (TYWLVGLSGT…NASVVHIGAI (174 aa)) form a ketoreductase (KR)domain region. One can recognise a Carrier 1 domain in the interval 2411 to 2492 (INSAEVYEII…EILETAQQLL (82 aa)). Ser-2452 bears the O-(pantetheine 4'-phosphoryl)serine mark. The interval 2497-2561 (LPKMDPNDKS…GAKKGETVSK (65 aa)) is disordered. The span at 2551-2561 (SGAKKGETVSK) shows a compositional bias: basic and acidic residues. The condensation stretch occupies residues 2645-3076 (SKKTPISFAQ…FSRNQALRLA (432 aa)). The tract at residues 3112–3516 (DIAKQKSHSL…RLLLEGRIAD (405 aa)) is adenylation. In terms of domain architecture, Carrier 2 spans 3634–3714 (QDLNDTESRL…DMAALVDELS (81 aa)). Ser-3674 is modified (O-(pantetheine 4'-phosphoryl)serine). The segment at 3760–3975 (LTGSTGFLGR…LDFISVDEAA (216 aa)) is reductase-like.

The protein belongs to the NRP synthetase family.

The protein operates within mycotoxin biosynthesis. Its function is as follows. Hybrid PKS-NRPS synthetase; part of the gene cluster that mediates the biosynthesis of the mycotoxin pyrichalasin H, a tyrosine-derived cytochalasan that inhibits the growth of rice seedlings, but also inhibits lymphocyte capping and actin polymerization and alters cell morphology. Pyrichalasin H is indicated as the responsible agent for the genus-specific pathogenicity of M.grisea toward crabgrass. The first step in the pathway is catalyzed by the O-methyltransferase pyiA which methylates free tyrosine to generate the precursor O-methyltyrosine. The hybrid PKS-NRPS pyiS, assisted by the enoyl reductase pyiC, are responsible for fusion of the O-methyltyrosine precursor and the polyketide backbone. The polyketide synthase module (PKS) of pyiS is responsible for the synthesis of the polyketide backbone and the downstream nonribosomal peptide synthetase (NRPS) amidates the carboxyl end of the polyketide with the O-methyltyrosine precursor. As the NRPS A-domain demonstrates substrate tolerance, pyiS can also use phenylalanine, tyrosine and even para-chlorophenylalanine as amino acid precursor, which leads to the production of novel cytochalasans, including halogenated cytochalasans. Because pyiS lacks a designated enoylreductase (ER) domain, the required activity is provided the enoyl reductase pyiC. Reduction by the hydrolyase pyiE leads to 1,5-dihydropyrrolone, which is substrate for dehydration and intra-molecular Diels-Alder cyclization by the Diels-Alderase pyiF to yield the required isoindolone-fused macrocycle. The tailoring cytochrome P450 monooxygenases piyD and piyG catalyze the hydroxylation at C-18 and C-7, respectivily, whereas the short-chain dehydrogenase/reductase pyiH reduces the carbonyl at C-21 in preparation for the transfer of an acetyl group by the acetyltransferase pyiB. These 3 reactions whose order is not clear yet, lead to the production of O-methylpyrichalasin J, a deacetylated pyrichalasin H. Finally, pyiB to converts O-methylpyrichalasin J into the final product pyrichalasin H via acetylation of C-21. The protein is Polyketide synthase-nonribosomal peptide synthetase pyiS of Pyricularia grisea (Crabgrass-specific blast fungus).